A 478-amino-acid chain; its full sequence is 3-isopropylmalate dehydratase large subunit (478 aa).

3 residues coordinate [4Fe-4S] cluster: Cys359, Cys420, and Cys423.

This sequence belongs to the aconitase/IPM isomerase family. LeuC type 1 subfamily. Heterodimer of LeuC and LeuD. [4Fe-4S] cluster is required as a cofactor.

It catalyses the reaction (2R,3S)-3-isopropylmalate = (2S)-2-isopropylmalate. Its pathway is amino-acid biosynthesis; L-leucine biosynthesis; L-leucine from 3-methyl-2-oxobutanoate: step 2/4. Catalyzes the isomerization between 2-isopropylmalate and 3-isopropylmalate, via the formation of 2-isopropylmaleate. The sequence is that of 3-isopropylmalate dehydratase large subunit from Psychrobacter sp. (strain PRwf-1).